A 527-amino-acid chain; its full sequence is Heat shock factor protein HSF8 (527 aa).

Residues 39-133 mediate DNA binding; sequence PFLVKTYDMV…KSISRRKPAH (95 aa). Disordered regions lie at residues 128–158, 241–273, and 297–341; these read RRKP…HSAS, NESN…ADGQ, and SSPR…TSGK. Residues 134 to 152 show a composition bias toward low complexity; sequence GHAQQQQQPHGNAQQQMQP. The segment covering 317 to 326 has biased composition (polar residues); that stretch reads SPQSNASSGR.

Belongs to the HSF family. As to quaternary structure, homotrimer. In terms of processing, exhibits temperature-dependent phosphorylation.

The protein localises to the nucleus. In terms of biological role, DNA-binding protein that specifically binds heat shock promoter elements (HSE) and activates transcription. In Solanum lycopersicum (Tomato), this protein is Heat shock factor protein HSF8 (HSF8).